The sequence spans 308 residues: Ribosomal protein L11 methyltransferase (308 aa).

S-adenosyl-L-methionine contacts are provided by Thr-160, Gly-181, Asp-203, and Asn-245.

It belongs to the methyltransferase superfamily. PrmA family.

It is found in the cytoplasm. The catalysed reaction is L-lysyl-[protein] + 3 S-adenosyl-L-methionine = N(6),N(6),N(6)-trimethyl-L-lysyl-[protein] + 3 S-adenosyl-L-homocysteine + 3 H(+). Functionally, methylates ribosomal protein L11. The sequence is that of Ribosomal protein L11 methyltransferase from Thermoanaerobacter sp. (strain X514).